Here is a 279-residue protein sequence, read N- to C-terminus: Octanoyl-[GcvH]:protein N-octanoyltransferase (279 aa).

A BPL/LPL catalytic domain is found at 48–253; the sequence is ETSPPVIRLW…TLEKLSDEIV (206 aa). Cys-152 functions as the Acyl-thioester intermediate in the catalytic mechanism.

This sequence belongs to the octanoyltransferase LipL family.

The enzyme catalyses N(6)-octanoyl-L-lysyl-[glycine-cleavage complex H protein] + L-lysyl-[lipoyl-carrier protein] = N(6)-octanoyl-L-lysyl-[lipoyl-carrier protein] + L-lysyl-[glycine-cleavage complex H protein]. Its pathway is protein modification; protein lipoylation via endogenous pathway; protein N(6)-(lipoyl)lysine from octanoyl-[acyl-carrier-protein]. Catalyzes the amidotransfer (transamidation) of the octanoyl moiety from octanoyl-GcvH to the lipoyl domain of the E2 subunit of lipoate-dependent enzymes. In Oceanobacillus iheyensis (strain DSM 14371 / CIP 107618 / JCM 11309 / KCTC 3954 / HTE831), this protein is Octanoyl-[GcvH]:protein N-octanoyltransferase.